The sequence spans 316 residues: Putative metal-binding protein TP_0034 (316 aa).

Positions Met-1–Ala-19 are cleaved as a signal peptide. Residues His-68, His-146, and His-210 each coordinate a divalent metal cation.

Belongs to the bacterial solute-binding protein 9 family.

It is found in the periplasm. Part of an ATP-binding cassette (ABC) transport system involved in metal import. Binds a metal with high affinity and specificity and delivers it to the membrane permease for translocation into the cytoplasm. This chain is Putative metal-binding protein TP_0034, found in Treponema pallidum (strain Nichols).